We begin with the raw amino-acid sequence, 242 residues long: uncharacterized protein (242 aa).

Residues 1-11 (MNFEAASAPSQ) are compositionally biased toward low complexity. A disordered region spans residues 1–45 (MNFEAASAPSQQPSPTPAPKTEEPKENGGSEQQADQPENSKKDDV).

It to U.parvum UU171.

This is an uncharacterized protein from Ureaplasma parvum serovar 3 (strain ATCC 700970).